Reading from the N-terminus, the 108-residue chain is Succinate dehydrogenase assembly factor 4, mitochondrial (108 aa).

Over residues 33–46 (NNNNNNNNNNNNNN) the composition is skewed to low complexity. 2 disordered regions span residues 33–59 (NNNN…KENQ) and 79–108 (NPIT…VSDF). The segment covering 95–108 (RYNDWERNGRVSDF) has biased composition (basic and acidic residues).

This sequence belongs to the SDHAF4 family. Interacts with SdhA in its FAD-bound form.

Its subcellular location is the mitochondrion matrix. Plays an essential role in the assembly of succinate dehydrogenase (SDH), an enzyme complex (also referred to as respiratory complex II) that is a component of both the tricarboxylic acid (TCA) cycle and the mitochondrial electron transport chain, and which couples the oxidation of succinate to fumarate with the reduction of ubiquinone (coenzyme Q) to ubiquinol. Binds to the flavoprotein subunit SdhA in its FAD-bound form, blocking the generation of excess reactive oxygen species (ROS) and facilitating its assembly with the iron-sulfur protein subunit SdhB into the SDH catalytic dimer. This chain is Succinate dehydrogenase assembly factor 4, mitochondrial, found in Dictyostelium discoideum (Social amoeba).